Consider the following 272-residue polypeptide: Proteasome subunit beta type-5 (272 aa).

A propeptide spans 1 to 55 (MKLDTSGLESTAPIFRRSDFVFDGLQMTPSFDLPNPTDFDGFQKEAVQMVKPAKG) (removed in mature form). Residue threonine 56 is the Nucleophile of the active site.

Belongs to the peptidase T1B family. As to quaternary structure, the 26S proteasome consists of a 20S proteasome core and two 19S regulatory subunits. The 20S proteasome core is composed of 28 subunits that are arranged in four stacked rings, resulting in a barrel-shaped structure. The two end rings are each formed by seven alpha subunits, and the two central rings are each formed by seven beta subunits. The catalytic chamber with the active sites is on the inside of the barrel.

Its subcellular location is the cytoplasm. The protein localises to the nucleus. The catalysed reaction is Cleavage of peptide bonds with very broad specificity.. Functionally, the proteasome is a multicatalytic proteinase complex which is characterized by its ability to cleave peptides with Arg, Phe, Tyr, Leu, and Glu adjacent to the leaving group at neutral or slightly basic pH. The proteasome has an ATP-dependent proteolytic activity. This chain is Proteasome subunit beta type-5, found in Spinacia oleracea (Spinach).